Reading from the N-terminus, the 249-residue chain is Isoamyl acetate-hydrolyzing esterase 1 homolog (249 aa).

Catalysis depends on Ser24, which acts as the Nucleophile. The residue at position 63 (Lys63) is an N6-succinyllysine. The Proton donor role is filled by Asp197. The active-site Proton acceptor is His200.

Belongs to the 'GDSL' lipolytic enzyme family. IAH1 subfamily.

In terms of biological role, probable lipase. In Mus musculus (Mouse), this protein is Isoamyl acetate-hydrolyzing esterase 1 homolog (Iah1).